We begin with the raw amino-acid sequence, 87 residues long: Small ribosomal subunit protein bS20 (87 aa).

Belongs to the bacterial ribosomal protein bS20 family.

Functionally, binds directly to 16S ribosomal RNA. The protein is Small ribosomal subunit protein bS20 of Clostridium botulinum (strain Eklund 17B / Type B).